The chain runs to 1720 residues: 6-methylcalicylic acide synthase (1720 aa).

The interval 1 to 31 (MDKQSASGEIPAMRWEPYHRRDPRNAKELSK) is disordered. Residues 1 to 399 (MDKQSASGEI…GTVSHAVIEQ (399 aa)) enclose the Ketosynthase family 3 (KS3) domain. A compositionally biased stretch (basic and acidic residues) spans 16–30 (EPYHRRDPRNAKELS). Residues C146, H281, and H321 each act as for beta-ketoacyl synthase activity in the active site. A malonyl-CoA:ACP transacylase (MAT) domain region spans residues 509 to 823 (VWVFSGHGAQ…IAQLHCRGAE (315 aa)). The tract at residues 868–987 (HTLLGQRIGI…AYWARDIQEA (120 aa)) is N-terminal hotdog fold. Residues 868 to 1139 (HTLLGQRIGI…FTAMRFSEIE (272 aa)) form a dehydratase (DH) domain region. The region spanning 868 to 1144 (HTLLGQRIGI…FSEIEGTPGV (277 aa)) is the PKS/mFAS DH domain. H900 (proton acceptor; for dehydratase activity) is an active-site residue. The segment at 1001 to 1144 (GTRIRDDFSI…FSEIEGTPGV (144 aa)) is C-terminal hotdog fold. Residue D1065 is the Proton donor; for dehydratase activity of the active site. The segment at 1148 to 1545 (MESLVHQLAW…AVAVQWTSWR (398 aa)) is product template (PT) domain. The Carrier domain maps to 1644–1718 (VYLDEKIRGC…HLVGWFAEKV (75 aa)). O-(pantetheine 4'-phosphoryl)serine is present on S1678.

It is found in the cytoplasm. The protein localises to the cytosol. It carries out the reaction 3 malonyl-CoA + acetyl-CoA + NADPH + 3 H(+) = 6-methylsalicylate + 3 CO2 + NADP(+) + 4 CoA + H2O. Its pathway is mycotoxin biosynthesis; patulin biosynthesis. 6-methylsalicylic acid synthase; part of the gene cluster that mediates the biosynthesis of patulin, an acetate-derived tetraketide mycotoxin produced by several fungal species that shows antimicrobial properties against several bacteria. PatK catalyzes the first step of the pathway which is the synthesis of 6-methylsalicylic acid via condensation of 1 acetate and 3 malonate units. The pathway begins with the synthesis of 6-methylsalicylic acid by the polyketide synthase (PKS) patK via condensation of acetate and malonate units. The 6-methylsalicylic acid decarboxylase patG then catalyzes the decarboxylation of 6-methylsalicylic acid to yield m-cresol (also known as 3-methylphenol). These first reactions occur in the cytosol. The intermediate m-cresol is then transported into the endoplasmic reticulum where the cytochrome P450 monooxygenase patH converts it to m-hydroxybenzyl alcohol, which is further converted to gentisyl alcohol by the cytochrome P450 monooxygenase patI. The oxidoreductases patJ and patO further convert gentisyl alcohol to isoepoxydon in the vacuole. PatN catalyzes then the transformation of isoepoxydon into phyllostine. The cluster protein patF is responsible for the conversion from phyllostine to neopatulin whereas the alcohol dehydrogenase patD converts neopatulin to E-ascladiol. The steps between isoepoxydon and E-ascladiol occur in the cytosol, and E-ascladiol is probably secreted to the extracellular space by one of the cluster-specific transporters patC or patM. Finally, the secreted patulin synthase patE catalyzes the conversion of E-ascladiol to patulin. The protein is 6-methylcalicylic acide synthase of Aspergillus clavatus (strain ATCC 1007 / CBS 513.65 / DSM 816 / NCTC 3887 / NRRL 1 / QM 1276 / 107).